The chain runs to 384 residues: Formate-dependent phosphoribosylglycinamide formyltransferase (384 aa).

N(1)-(5-phospho-beta-D-ribosyl)glycinamide contacts are provided by residues 14–15 and glutamate 74; that span reads EL. ATP contacts are provided by residues arginine 106, lysine 147, 152–157, 187–190, and glutamate 195; these read SSGKGQ and EEFI. An ATP-grasp domain is found at 111–300; the sequence is RLAAETLHLP…EFALHVRAVL (190 aa). Mg(2+)-binding residues include glutamate 259 and glutamate 271. N(1)-(5-phospho-beta-D-ribosyl)glycinamide-binding positions include aspartate 278, lysine 348, and 355 to 356; that span reads RR.

The protein belongs to the PurK/PurT family. In terms of assembly, homodimer.

The catalysed reaction is N(1)-(5-phospho-beta-D-ribosyl)glycinamide + formate + ATP = N(2)-formyl-N(1)-(5-phospho-beta-D-ribosyl)glycinamide + ADP + phosphate + H(+). Its pathway is purine metabolism; IMP biosynthesis via de novo pathway; N(2)-formyl-N(1)-(5-phospho-D-ribosyl)glycinamide from N(1)-(5-phospho-D-ribosyl)glycinamide (formate route): step 1/1. In terms of biological role, involved in the de novo purine biosynthesis. Catalyzes the transfer of formate to 5-phospho-ribosyl-glycinamide (GAR), producing 5-phospho-ribosyl-N-formylglycinamide (FGAR). Formate is provided by PurU via hydrolysis of 10-formyl-tetrahydrofolate. The sequence is that of Formate-dependent phosphoribosylglycinamide formyltransferase from Bacillus velezensis (strain DSM 23117 / BGSC 10A6 / LMG 26770 / FZB42) (Bacillus amyloliquefaciens subsp. plantarum).